Reading from the N-terminus, the 327-residue chain is E3 ubiquitin-protein ligase ZNRF4 (327 aa).

The N-terminal stretch at 1–28 (MARFAWTRVAPVALVTFWLVLSLSPTDA) is a signal peptide. The Lumenal portion of the chain corresponds to 29-150 (QVNLSSVDFL…EPCPDPECHP (122 aa)). An N-linked (GlcNAc...) asparagine glycan is attached at Asn31. Residues 151–171 (VVVASWALARALALAASTLFV) form a helical membrane-spanning segment. Topologically, residues 172–327 (LRQLWPWVRG…AQSEATSELS (156 aa)) are cytoplasmic. The segment at 209 to 252 (CAICLDDYEEGERLKILPCAHAYHCRCIDPWFSRAAQRSCPLCK) adopts an RING-type; atypical zinc-finger fold. Residues 256–265 (ASTHDGSTDG) are compositionally biased toward polar residues. Positions 256–279 (ASTHDGSTDGSVGGEEPPLPGHRP) are disordered.

In terms of assembly, interacts with CANX. As to expression, expressed exclusively in spermatids (at protein level).

The protein resides in the endoplasmic reticulum membrane. It catalyses the reaction S-ubiquitinyl-[E2 ubiquitin-conjugating enzyme]-L-cysteine + [acceptor protein]-L-lysine = [E2 ubiquitin-conjugating enzyme]-L-cysteine + N(6)-ubiquitinyl-[acceptor protein]-L-lysine.. It functions in the pathway protein modification; protein ubiquitination. In terms of biological role, E3 ubiquitin-protein ligase that acts as a negative regulator of NOD2 signaling by mediating ubiquitination and degradation of RIPK2. Also catalyzes ubiquitination and proteasomal degradation of CANX within the endoplasmic reticulum. Could have a role in spermatogenesis. The protein is E3 ubiquitin-protein ligase ZNRF4 of Mus musculus (Mouse).